The primary structure comprises 308 residues: D-alanine--D-alanine ligase (308 aa).

The 198-residue stretch at 104–301 folds into the ATP-grasp domain; sequence KQIWQGSDLP…FDELCVAILE (198 aa). 130–185 provides a ligand contact to ATP; sequence IAELGLPVIIKPVHEGSSVGMSKVEKAEDFAAAIEKATQHDAVVMAEKWITGREFT. Mg(2+)-binding residues include D255, E268, and N270.

The protein belongs to the D-alanine--D-alanine ligase family. Mg(2+) is required as a cofactor. It depends on Mn(2+) as a cofactor.

It is found in the cytoplasm. The enzyme catalyses 2 D-alanine + ATP = D-alanyl-D-alanine + ADP + phosphate + H(+). It functions in the pathway cell wall biogenesis; peptidoglycan biosynthesis. Cell wall formation. In Acinetobacter baumannii (strain SDF), this protein is D-alanine--D-alanine ligase.